Consider the following 294-residue polypeptide: Mitochondrial substrate carrier family protein ucpB (294 aa).

The Mitochondrial intermembrane segment spans residues 1–10; it reads MTSQESIGIK. Solcar repeat units lie at residues 9-93, 101-187, and 197-288; these read IKFL…IKNY, TNLL…IKHM, and DGLQ…LRKV. A helical membrane pass occupies residues 11-31; sequence FLFGGLSCMGAAVVSNPVDVL. Residues 32 to 67 lie on the Mitochondrial matrix side of the membrane; it reads KTRFQIHGEGIDSKSLGLVNGTIKIIKNEGISAMYK. The chain crosses the membrane as a helical span at residues 68–88; sequence GLTPSLLREATYSTLRMGGYD. The Mitochondrial intermembrane segment spans residues 89–106; the sequence is VIKNYFIDSNGKTNLLSK. A helical transmembrane segment spans residues 107–127; that stretch reads VTSGALSGALGACITSPTDLI. At 128–161 the chain is on the mitochondrial matrix side; it reads KVRMQASSKGVKYDSISSAFKEIIAKEGIKGLWK. A helical transmembrane segment spans residues 162-182; sequence GVGPTTQRAALLTASQIPSYD. Residues 183-192 lie on the Mitochondrial intermembrane side of the membrane; the sequence is HIKHMILDHG. The chain crosses the membrane as a helical span at residues 193 to 213; it reads IIQVDGLQVHIVSSIFAGLIA. The Mitochondrial matrix segment spans residues 214–267; it reads SITTSPVDLVKTRIMNQPFDSNGVGLIYKSSYDCFKKTFQSEGISGLYKGFLPN. Residues 268-285 traverse the membrane as a helical segment; that stretch reads WFRIGPHTIVTFILYEYL. Over 286–294 the chain is Mitochondrial intermembrane; it reads RKVSGIKPI.

Belongs to the mitochondrial carrier (TC 2.A.29) family.

It localises to the mitochondrion inner membrane. Functionally, mitochondrial solute carriers shuttle metabolites, nucleotides, and cofactors through the mitochondrial inner membrane. This Dictyostelium discoideum (Social amoeba) protein is Mitochondrial substrate carrier family protein ucpB (ucpB).